The following is a 130-amino-acid chain: Large ribosomal subunit protein bL12 (130 aa).

It belongs to the bacterial ribosomal protein bL12 family. In terms of assembly, homodimer. Part of the ribosomal stalk of the 50S ribosomal subunit. Forms a multimeric L10(L12)X complex, where L10 forms an elongated spine to which 2 to 4 L12 dimers bind in a sequential fashion. Binds GTP-bound translation factors.

Forms part of the ribosomal stalk which helps the ribosome interact with GTP-bound translation factors. Is thus essential for accurate translation. This Parafrankia sp. (strain EAN1pec) protein is Large ribosomal subunit protein bL12.